A 355-amino-acid polypeptide reads, in one-letter code: Elongation factor Ts (355 aa).

The involved in Mg(2+) ion dislocation from EF-Tu stretch occupies residues 82–85 (TDFV).

The protein belongs to the EF-Ts family.

The protein resides in the cytoplasm. Associates with the EF-Tu.GDP complex and induces the exchange of GDP to GTP. It remains bound to the aminoacyl-tRNA.EF-Tu.GTP complex up to the GTP hydrolysis stage on the ribosome. This chain is Elongation factor Ts, found in Wolinella succinogenes (strain ATCC 29543 / DSM 1740 / CCUG 13145 / JCM 31913 / LMG 7466 / NCTC 11488 / FDC 602W) (Vibrio succinogenes).